A 247-amino-acid polypeptide reads, in one-letter code: 3(1)-hydroxy-L-isoleucine 4-dioxygenase (247 aa).

Fe cation contacts are provided by His-160, Asp-162, and His-213.

This sequence belongs to the iron/ascorbate-dependent oxidoreductase family. The cofactor is L-ascorbate. Fe(2+) serves as cofactor.

The enzyme catalyses 3(1)-hydroxy-L-isoleucine + 2-oxoglutarate + O2 = (4S)-3(1),4-dihydroxy-L-isoleucine + succinate + CO2. Catalyzes the hydroxylation of L-4'-hydroxyisoleucine (4'-HIL) at the C-4 position to form L-4,4'-dihydroxyisoleucine (4,4'-DIHIL). Together with HilA, catalyzes the two step conversion of L-isoleucine into L-4,4'-dihydroxyisoleucine. In vitro, in the absence of HilA, can also catalyze the oxidation of L-methionine and the C-4-hydroxylation of L-leucine and L-isoleucine. The chain is 3(1)-hydroxy-L-isoleucine 4-dioxygenase from Pantoea ananatis (strain AJ13355).